A 743-amino-acid chain; its full sequence is Cap-specific mRNA (nucleoside-2'-O-)-methyltransferase 2 (743 aa).

Residues 113 to 326 (ELCTQAWAKF…LYIVCLDYQA (214 aa)) form the Adrift-type SAM-dependent 2'-O-MTase domain. Residue K121 is part of the active site. Residues G152, W171, and D239 each coordinate S-adenosyl-L-methionine. Residue D239 is part of the active site. The Proton acceptor role is filled by K279.

It is found in the nucleus. The protein localises to the cytoplasm. The enzyme catalyses a 5'-end (N(7)-methyl 5'-triphosphoguanosine)-(2'-O-methyl-ribonucleoside)-(ribonucleotide) in mRNA + S-adenosyl-L-methionine = a 5'-end (N(7)-methyl 5'-triphosphoguanosine)-(2'-O-methyl-ribonucleoside)-(2'-O-methyl-ribonucleotide) in mRNA + S-adenosyl-L-homocysteine + H(+). In terms of biological role, S-adenosyl-L-methionine-dependent methyltransferase that mediates mRNA cap2 2'-O-ribose methylation to the 5'-cap structure of mRNAs. Methylates the ribose of the second nucleotide of a m(7)GpppG-capped mRNA and small nuclear RNA (snRNA) (cap0) to produce m(7)GpppRmpNm (cap2). This chain is Cap-specific mRNA (nucleoside-2'-O-)-methyltransferase 2 (cmtr2), found in Danio rerio (Zebrafish).